The chain runs to 197 residues: Large ribosomal subunit protein bL25 (197 aa).

Belongs to the bacterial ribosomal protein bL25 family. CTC subfamily. As to quaternary structure, part of the 50S ribosomal subunit; part of the 5S rRNA/L5/L18/L25 subcomplex. Contacts the 5S rRNA. Binds to the 5S rRNA independently of L5 and L18.

Functionally, this is one of the proteins that binds to the 5S RNA in the ribosome where it forms part of the central protuberance. The polypeptide is Large ribosomal subunit protein bL25 (Caulobacter vibrioides (strain ATCC 19089 / CIP 103742 / CB 15) (Caulobacter crescentus)).